The following is a 567-amino-acid chain: Dihydroxy-acid dehydratase (567 aa).

Cysteine 57 is a [2Fe-2S] cluster binding site. Aspartate 89 is a Mg(2+) binding site. Cysteine 130 is a binding site for [2Fe-2S] cluster. Mg(2+)-binding residues include aspartate 131 and lysine 132. An N6-carboxylysine modification is found at lysine 132. Cysteine 202 is a binding site for [2Fe-2S] cluster. Glutamate 453 is a binding site for Mg(2+). Serine 479 functions as the Proton acceptor in the catalytic mechanism.

Belongs to the IlvD/Edd family. Homodimer. [2Fe-2S] cluster is required as a cofactor. The cofactor is Mg(2+).

It carries out the reaction (2R)-2,3-dihydroxy-3-methylbutanoate = 3-methyl-2-oxobutanoate + H2O. The catalysed reaction is (2R,3R)-2,3-dihydroxy-3-methylpentanoate = (S)-3-methyl-2-oxopentanoate + H2O. Its pathway is amino-acid biosynthesis; L-isoleucine biosynthesis; L-isoleucine from 2-oxobutanoate: step 3/4. It functions in the pathway amino-acid biosynthesis; L-valine biosynthesis; L-valine from pyruvate: step 3/4. Its function is as follows. Functions in the biosynthesis of branched-chain amino acids. Catalyzes the dehydration of (2R,3R)-2,3-dihydroxy-3-methylpentanoate (2,3-dihydroxy-3-methylvalerate) into 2-oxo-3-methylpentanoate (2-oxo-3-methylvalerate) and of (2R)-2,3-dihydroxy-3-methylbutanoate (2,3-dihydroxyisovalerate) into 2-oxo-3-methylbutanoate (2-oxoisovalerate), the penultimate precursor to L-isoleucine and L-valine, respectively. The polypeptide is Dihydroxy-acid dehydratase (Nocardioides sp. (strain ATCC BAA-499 / JS614)).